The primary structure comprises 995 residues: DExH-box ATP-dependent RNA helicase DExH1 (995 aa).

Disordered stretches follow at residues 1 to 42 (MPPH…EQRW) and 156 to 192 (KTTQ…ASKL). The segment covering 25 to 37 (RGGGGRGGGGGGR) has biased composition (gly residues). The segment covering 161–170 (SGSSGASASA) has biased composition (low complexity). Polar residues predominate over residues 171–181 (FNDQQDRTSTL). The region spanning 238–405 (LNSVSQNQVL…FGNSPTMHIP (168 aa)) is the Helicase ATP-binding domain. ATP is bound at residue 251 to 258 (GETGCGKT). Positions 352-355 (DEIH) match the DEIH box motif. The tract at residues 429 to 450 (SSDSGNYQGSSRGRRRESESKK) is disordered. The Helicase C-terminal domain occupies 484-663 (QIDVDLVEAT…ELCLHIKSLQ (180 aa)).

It belongs to the DExH box helicase family.

The catalysed reaction is ATP + H2O = ADP + phosphate + H(+). This is DExH-box ATP-dependent RNA helicase DExH1 from Arabidopsis thaliana (Mouse-ear cress).